We begin with the raw amino-acid sequence, 234 residues long: Phosphoribosylformylglycinamidine synthase subunit PurQ (234 aa).

In terms of domain architecture, Glutamine amidotransferase type-1 spans 3–231 (AAVVVFPGSN…ALYLERRKDH (229 aa)). Residue Cys-87 is the Nucleophile of the active site. Residues His-200 and Glu-202 contribute to the active site.

In terms of assembly, part of the FGAM synthase complex composed of 1 PurL, 1 PurQ and 2 PurS subunits.

It is found in the cytoplasm. It catalyses the reaction N(2)-formyl-N(1)-(5-phospho-beta-D-ribosyl)glycinamide + L-glutamine + ATP + H2O = 2-formamido-N(1)-(5-O-phospho-beta-D-ribosyl)acetamidine + L-glutamate + ADP + phosphate + H(+). The catalysed reaction is L-glutamine + H2O = L-glutamate + NH4(+). It functions in the pathway purine metabolism; IMP biosynthesis via de novo pathway; 5-amino-1-(5-phospho-D-ribosyl)imidazole from N(2)-formyl-N(1)-(5-phospho-D-ribosyl)glycinamide: step 1/2. Its function is as follows. Part of the phosphoribosylformylglycinamidine synthase complex involved in the purines biosynthetic pathway. Catalyzes the ATP-dependent conversion of formylglycinamide ribonucleotide (FGAR) and glutamine to yield formylglycinamidine ribonucleotide (FGAM) and glutamate. The FGAM synthase complex is composed of three subunits. PurQ produces an ammonia molecule by converting glutamine to glutamate. PurL transfers the ammonia molecule to FGAR to form FGAM in an ATP-dependent manner. PurS interacts with PurQ and PurL and is thought to assist in the transfer of the ammonia molecule from PurQ to PurL. The polypeptide is Phosphoribosylformylglycinamidine synthase subunit PurQ (Pseudothermotoga lettingae (strain ATCC BAA-301 / DSM 14385 / NBRC 107922 / TMO) (Thermotoga lettingae)).